A 365-amino-acid polypeptide reads, in one-letter code: 3-dehydroquinate synthase (365 aa).

NAD(+) is bound by residues 107 to 111, 131 to 132, Lys144, and Lys153; these read GVIGD and TS. Residues Glu186, His251, and His268 each coordinate Zn(2+).

This sequence belongs to the sugar phosphate cyclases superfamily. Dehydroquinate synthase family. Co(2+) is required as a cofactor. The cofactor is Zn(2+). NAD(+) serves as cofactor.

The protein resides in the cytoplasm. It catalyses the reaction 7-phospho-2-dehydro-3-deoxy-D-arabino-heptonate = 3-dehydroquinate + phosphate. It participates in metabolic intermediate biosynthesis; chorismate biosynthesis; chorismate from D-erythrose 4-phosphate and phosphoenolpyruvate: step 2/7. Its function is as follows. Catalyzes the conversion of 3-deoxy-D-arabino-heptulosonate 7-phosphate (DAHP) to dehydroquinate (DHQ). The sequence is that of 3-dehydroquinate synthase from Crocosphaera subtropica (strain ATCC 51142 / BH68) (Cyanothece sp. (strain ATCC 51142)).